The sequence spans 326 residues: MDLSATNHRIPLGDGNSIPIIGLGTYSEPKTTPKGSCATSVKIAIDTGYRHIDGAYIYQNEHEVGETFREKIAEGKVRREDIFYCGKLWATNHDPVMVRPTLERTLKVLKLDYIDLYIIEIPMAFKPGDVVYPRDENGKWLYHKTNLCATWEALEACKDAGLVKSLGVSNFNRQQLELLLNKPGLKHKPVCNQVECHPYFTQPKLLKFCQQHDIIIVAYSPLGTCRNPMWVNTSLPPLLKDTLLNSLGKKYKKTAAQIVLRFNVQRGVVVIPKSFNPERIKENFQIFDFSLTEEEMKDIEALNKNVRYVELLMWRDHPEYPFNDEY.

NADP(+) contacts are provided by residues 22–26 and D53; that span reads GLGTY. Y26 is a substrate binding site. Positions 58, 89, 120, and 132 each coordinate substrate. Residue Y58 is the Proton donor of the active site. Residues 169-170, Q193, and 219-224 contribute to the NADP(+) site; these read SN and YSPLGT. W230 contacts substrate. 273-283 is an NADP(+) binding site; it reads KSFNPERIKEN.

It belongs to the aldo/keto reductase family.

Its subcellular location is the cytoplasm. The catalysed reaction is 5beta-cholestan-3-one + NADP(+) = cholest-4-en-3-one + NADPH + H(+). It carries out the reaction 4,5beta-dihydrocortisone + NADP(+) = cortisone + NADPH + H(+). The enzyme catalyses cortisol + NADPH + H(+) = 5beta-dihydrocortisol + NADP(+). It catalyses the reaction corticosterone + NADPH + H(+) = 5beta-dihydrocorticosterone + NADP(+). The catalysed reaction is 7alpha,12alpha-dihydroxycholest-4-en-3-one + NADPH + H(+) = 7alpha,12alpha-dihydroxy-5beta-cholestan-3-one + NADP(+). It carries out the reaction 7alpha-hydroxycholest-4-en-3-one + NADPH + H(+) = 7alpha-hydroxy-5beta-cholestan-3-one + NADP(+). The enzyme catalyses epitestosterone + NADPH + H(+) = 5beta-dihydroepitestosterone + NADP(+). It catalyses the reaction androst-4-ene-3,17-dione + NADPH + H(+) = 5beta-androstane-3,17-dione + NADP(+). The catalysed reaction is progesterone + NADPH + H(+) = 5beta-pregnan-3,20-dione + NADP(+). It carries out the reaction 21-hydroxyprogesterone + NADPH + H(+) = 5beta-dihydrodeoxycorticosterone + NADP(+). The enzyme catalyses aldosterone + NADPH + H(+) = 5beta-dihydroaldosterone + NADP(+). It catalyses the reaction 17beta-hydroxyandrosta-1,4-dien-3-one + NADPH + H(+) = 17beta-hydroxy-5beta-androst-1-en-3-one + NADP(+). The catalysed reaction is 17beta-hydroxyestr-4-en-3-one + NADPH + H(+) = 17beta-hydroxy-5beta-estran-3-one + NADP(+). It carries out the reaction 5beta-dihydrotestosterone + NADP(+) = testosterone + NADPH + H(+). The enzyme catalyses androst-4-ene-3,11,17-trione + NADPH + H(+) = 17beta-hydroxyandrost-4-ene-3,11-dione + NADP(+). With respect to regulation, subject to inhibition by high substrate concentrations. Inhibited by testosterone concentrations above 10 uM. Inhibited by the primary and secondary bile acids chenodeoxycholic acid and ursodeoxycholic acid. Its function is as follows. Catalyzes the stereospecific NADPH-dependent reduction of the C4-C5 double bond of bile acid intermediates and steroid hormones carrying a delta(4)-3-one structure to yield an A/B cis-ring junction. This cis-configuration is crucial for bile acid biosynthesis and plays important roles in steroid metabolism. Capable of reducing a broad range of delta-(4)-3-ketosteroids from C18 (such as, 17beta-hydroxyestr-4-en-3-one) to C27 (such as, 7alpha-hydroxycholest-4-en-3-one). The sequence is that of Aldo-keto reductase family 1 member D1 (AKR1D1) from Oryctolagus cuniculus (Rabbit).